Reading from the N-terminus, the 309-residue chain is Enoyl-CoA hydratase 2, peroxisomal (309 aa).

Residues His-95 to Gly-96, Lys-124, Asp-208 to His-213, Gly-231, and Phe-261 contribute to the substrate site. Residues Pro-183 to Val-295 enclose the MaoC-like domain. The Microbody targeting signal signature appears at Ser-307–Leu-309.

Ubiquitous.

The protein localises to the peroxisome. It catalyses the reaction a (3R)-3-hydroxyacyl-CoA = a (2E)-enoyl-CoA + H2O. It functions in the pathway lipid metabolism; fatty acid beta-oxidation. Functionally, bidirectional monofunctional enoyl-CoA hydratase 2 involved in the degradation of even cis-unsaturated fatty acids. Devoid of 3-hydroxyacyl-CoA dehydrogenase activity. The polypeptide is Enoyl-CoA hydratase 2, peroxisomal (ECH2) (Arabidopsis thaliana (Mouse-ear cress)).